Reading from the N-terminus, the 151-residue chain is ALK and LTK ligand 2 (151 aa).

An N-terminal signal peptide occupies residues 1-25 (MRVSGRPMLLALLLLLSTVGDPGHA). 2 disulfide bridges follow: C112–C148 and C126–C135.

The protein belongs to the ALKAL family. Homodimer.

The protein resides in the secreted. The protein localises to the cell membrane. Functionally, cytokine that acts as a physiological ligand for receptor tyrosine kinases LTK and ALK, leading to their activation. Cytokine-binding is sufficient to activate LTK. In contrast, ALKAL2-driven activation of ALK is coupled with heparin-binding to ALK. Stimulation of ALK signaling is involved in neural development and regulation of energy expenditure. This chain is ALK and LTK ligand 2, found in Rattus norvegicus (Rat).